The chain runs to 447 residues: Exodeoxyribonuclease 7 large subunit (447 aa).

This sequence belongs to the XseA family. In terms of assembly, heterooligomer composed of large and small subunits.

Its subcellular location is the cytoplasm. It carries out the reaction Exonucleolytic cleavage in either 5'- to 3'- or 3'- to 5'-direction to yield nucleoside 5'-phosphates.. In terms of biological role, bidirectionally degrades single-stranded DNA into large acid-insoluble oligonucleotides, which are then degraded further into small acid-soluble oligonucleotides. This chain is Exodeoxyribonuclease 7 large subunit, found in Lactobacillus helveticus (strain DPC 4571).